We begin with the raw amino-acid sequence, 197 residues long: Non-structural protein 5 (197 aa).

Residues 17 to 30 (IFKNESSSTTSTLS) are compositionally biased toward low complexity. Positions 17–36 (IFKNESSSTTSTLSGKSIGR) are disordered. Position 92 (Asp-92) interacts with Mg(2+).

The protein belongs to the rotavirus NSP5 family. As to quaternary structure, homodimer. Interacts with VP1. Interacts with VP2. Interacts with NSP2; this interaction leads to up-regulation of NSP5 hyperphosphorylation and formation of virus factories. Interacts with NSP6. Participates in the selective exclusion of host proteins from stress granules (SG) and P bodies (PB). Also participates in the sequestration of these remodeled organelles in viral factories. The cofactor is Mg(2+). Post-translationally, O-glycosylated.

The protein localises to the host cytoplasm. In terms of biological role, plays an essential role in the viral genome replication. Participates, together with NSP2, in the formation of viral factories (viroplasms), which are large inclusions in the host cytoplasm where replication intermediates are assembled and viral RNA replication takes place. Orchestrates the recruitment of viroplasmic proteins such as capsid proteins to these factories. Participates in the selective exclusion of host proteins from stress granules (SG) and P bodies (PB). Also participates in the sequestration of these remodeled organelles in viral factories. In Homo sapiens (Human), this protein is Non-structural protein 5.